The sequence spans 273 residues: Shikimate dehydrogenase (NADP(+)) (273 aa).

Shikimate is bound by residues 15 to 17 and Thr-62; that span reads SLS. Lys-66 acts as the Proton acceptor in catalysis. Position 78 (Glu-78) interacts with NADP(+). Residues Asn-87 and Asp-102 each contribute to the shikimate site. Residues 126 to 130, 149 to 154, Ile-215, and Gly-238 contribute to the NADP(+) site; these read GAGGA and NRTPER.

Belongs to the shikimate dehydrogenase family. Homodimer.

It carries out the reaction shikimate + NADP(+) = 3-dehydroshikimate + NADPH + H(+). Its pathway is metabolic intermediate biosynthesis; chorismate biosynthesis; chorismate from D-erythrose 4-phosphate and phosphoenolpyruvate: step 4/7. Functionally, involved in the biosynthesis of the chorismate, which leads to the biosynthesis of aromatic amino acids. Catalyzes the reversible NADPH linked reduction of 3-dehydroshikimate (DHSA) to yield shikimate (SA). The protein is Shikimate dehydrogenase (NADP(+)) of Desulfitobacterium hafniense (strain Y51).